A 146-amino-acid polypeptide reads, in one-letter code: Transcriptional regulator MraZ (146 aa).

SpoVT-AbrB domains are found at residues 5 to 47 and 76 to 119; these read EYYH…TITD and SVQV…AKER.

This sequence belongs to the MraZ family. Forms oligomers.

The protein localises to the cytoplasm. It localises to the nucleoid. The chain is Transcriptional regulator MraZ from Dictyoglomus turgidum (strain DSM 6724 / Z-1310).